The chain runs to 1180 residues: Lon protease homolog 2, peroxisomal (1180 aa).

Positions 19-366 (LPTCKLDSNL…ELINMINQLI (348 aa)) constitute a Lon N-terminal domain. The segment at 416–465 (PISNRGNIKSFNNSENGNNNKTNGSGITSRRPKSNEDGGEVYDEEDDDEE) is disordered. Low complexity predominate over residues 422 to 444 (NIKSFNNSENGNNNKTNGSGITS). Residues 452 to 465 (DGGEVYDEEDDDEE) show a composition bias toward acidic residues. 667–674 (GPPGTGKT) provides a ligand contact to ATP. A Lon proteolytic domain is found at 924 to 1163 (NSRVGIVNGL…YDVMKILWGE (240 aa)). Residues Ser-1032 and Lys-1075 contribute to the active site.

It belongs to the peptidase S16 family.

It localises to the peroxisome matrix. It carries out the reaction Hydrolysis of proteins in presence of ATP.. In terms of biological role, ATP-dependent serine protease that mediates the selective degradation of misfolded and unassembled polypeptides in the peroxisomal matrix. Necessary for type 2 peroxisome targeting signal (PTS2)-containing protein processing and facilitates peroxisome matrix protein import. This is Lon protease homolog 2, peroxisomal from Scheffersomyces stipitis (strain ATCC 58785 / CBS 6054 / NBRC 10063 / NRRL Y-11545) (Yeast).